A 155-amino-acid chain; its full sequence is MSRRSTAEKETAKSDPIYRNRFINMLVNRILKHGKKSLAYRILYRAMKKIQQKTGKNPLSVSRQAIRGVTPDVTVKARRVGGSTYQVPIEIRSTQGKALAIRWLLGASRKRPGRNMAFKLSYELMDAARENGNAIRKKEETHRMAEAXRAFAHFR.

The protein belongs to the universal ribosomal protein uS7 family. Part of the 30S ribosomal subunit.

Its subcellular location is the plastid. The protein localises to the chloroplast. One of the primary rRNA binding proteins, it binds directly to 16S rRNA where it nucleates assembly of the head domain of the 30S subunit. The polypeptide is Small ribosomal subunit protein uS7c (rps7) (Ginkgo biloba (Ginkgo)).